Consider the following 79-residue polypeptide: Quinohemoprotein amine dehydrogenase subunit gamma (79 aa).

The segment at residues 7 to 16 (CTATTDPGWE) is a cross-link (4-cysteinyl-glutamic acid (Cys-Glu)). Cross-links (3-cysteinyl-aspartic acid (Cys-Asp)) lie at residues 27-33 (CQPMEAD) and 41-49 (CWWPAQVPD). Residue Asp-33 is the Proton acceptor of the active site. The segment at residues 37-43 (CSDPCWW) is a cross-link (4'-cysteinyl-tryptophylquinone (Cys-Trp)). Trp-43 carries the tryptophylquinone modification.

This sequence belongs to the quinohemoprotein amine dehydrogenase subunit gamma family. As to quaternary structure, heterotrimer of an alpha, a beta and a gamma subunit. Cysteine tryptophylquinone residue serves as cofactor. Post-translationally, the cysteine tryptophylquinone (CTQ) is generated by oxidation of the indole ring of a tryptophan residue to form tryptophylquinone, followed by covalent cross-linking with a cysteine residue.

It is found in the periplasm. The catalysed reaction is an aliphatic amine + A + H2O = an aldehyde + AH2 + NH4(+). Catalyzes the oxidative deamination of a wide range of aliphatic monoamines and diamines. The physiological electron acceptor is an azurin-like blue protein. The polypeptide is Quinohemoprotein amine dehydrogenase subunit gamma (qhnDH) (Pseudomonas putida (strain ATCC 47054 / DSM 6125 / CFBP 8728 / NCIMB 11950 / KT2440)).